We begin with the raw amino-acid sequence, 134 residues long: Rhoptry antigen protein (134 aa).

Disordered stretches follow at residues 21-82 (MGPL…SNLK) and 96-134 (QLDK…ENEL). Residues 29–38 (KSTSAASTSD) are compositionally biased toward polar residues. Positions 39 to 54 (ELSGSEGPSTESTSTG) are enriched in low complexity. Residues 57–69 (GEDKTTDNTYKEM) are compositionally biased toward basic and acidic residues. The segment covering 102-113 (PKKKKSKRKKKR) has biased composition (basic residues). Basic and acidic residues predominate over residues 114-126 (DSSSDRILLEESK).

The chain is Rhoptry antigen protein from Plasmodium falciparum.